Here is a 333-residue protein sequence, read N- to C-terminus: Adenosine deaminase (333 aa).

Positions 12 and 14 each coordinate Zn(2+). 3 residues coordinate substrate: H14, D16, and G170. H197 serves as a coordination point for Zn(2+). The active-site Proton donor is E200. D278 contacts Zn(2+). D279 is a substrate binding site.

This sequence belongs to the metallo-dependent hydrolases superfamily. Adenosine and AMP deaminases family. Adenosine deaminase subfamily. Requires Zn(2+) as cofactor.

It catalyses the reaction adenosine + H2O + H(+) = inosine + NH4(+). It carries out the reaction 2'-deoxyadenosine + H2O + H(+) = 2'-deoxyinosine + NH4(+). Catalyzes the hydrolytic deamination of adenosine and 2-deoxyadenosine. This Escherichia coli (strain SMS-3-5 / SECEC) protein is Adenosine deaminase.